Reading from the N-terminus, the 248-residue chain is Granulin (248 aa).

This sequence belongs to the polyhedrin family.

Its function is as follows. Component of the virus occlusion bodies, which are large proteinaceous structures, that protect the virus from the outside environment for extended periods until they are ingested by insect larvae. In Choristoneura fumiferana (Spruce budworm moth), this protein is Granulin.